The sequence spans 344 residues: DNA-directed RNA polymerase subunit alpha (344 aa).

The interval methionine 1–proline 238 is alpha N-terminal domain (alpha-NTD). Residues aspartate 253–aspartate 344 form an alpha C-terminal domain (alpha-CTD) region.

This sequence belongs to the RNA polymerase alpha chain family. In terms of assembly, homodimer. The RNAP catalytic core consists of 2 alpha, 1 beta, 1 beta' and 1 omega subunit. When a sigma factor is associated with the core the holoenzyme is formed, which can initiate transcription.

The catalysed reaction is RNA(n) + a ribonucleoside 5'-triphosphate = RNA(n+1) + diphosphate. In terms of biological role, DNA-dependent RNA polymerase catalyzes the transcription of DNA into RNA using the four ribonucleoside triphosphates as substrates. The polypeptide is DNA-directed RNA polymerase subunit alpha (Helicobacter acinonychis (strain Sheeba)).